Reading from the N-terminus, the 196-residue chain is Ribosome maturation factor RimP (196 aa).

The interval 164–196 (LAPQKPNKPGPKKPGHDKKKPSNEPAAGKPRAE) is disordered. Over residues 173–182 (GPKKPGHDKK) the composition is skewed to basic residues.

This sequence belongs to the RimP family.

The protein localises to the cytoplasm. Its function is as follows. Required for maturation of 30S ribosomal subunits. The protein is Ribosome maturation factor RimP of Xanthomonas campestris pv. campestris (strain 8004).